Here is a 548-residue protein sequence, read N- to C-terminus: 5-epi-aristolochene synthase 2 (548 aa).

Residues Asp301, Asp305, Asp444, Thr448, and Glu452 each contribute to the Mg(2+) site. Positions 301–305 match the DDXXD motif motif; sequence DDTFD.

This sequence belongs to the terpene synthase family. In terms of assembly, monomer. Mg(2+) is required as a cofactor. In terms of tissue distribution, expressed in roots, but not in shoots.

Its subcellular location is the cytoplasm. The catalysed reaction is (2E,6E)-farnesyl diphosphate = (+)-5-epi-aristolochene + diphosphate. It participates in secondary metabolite biosynthesis; terpenoid biosynthesis. Its function is as follows. Catalyzes the cyclization of trans,trans-farnesyl diphosphate (FPP) to the bicyclic intermediate 5-epi-aristolochene, initial step in the conversion of FPP to the sesquiterpenoid antifungal phytoalexin capsidiol. Produces germacrene A as an enzyme-bound intermediate that is not released by the enzyme, but is further cyclized to produce the bicyclic 5-epi-aristolochene. This Nicotiana attenuata (Coyote tobacco) protein is 5-epi-aristolochene synthase 2.